The sequence spans 293 residues: uncharacterized protein (293 aa).

This is an uncharacterized protein from Mycobacterium tuberculosis (strain CDC 1551 / Oshkosh).